The primary structure comprises 572 residues: MFS-type transporter pydD (572 aa).

The segment covering 1 to 15 has biased composition (basic and acidic residues); that stretch reads MLQEDKSSETMHDPS. The tract at residues 1 to 46 is disordered; it reads MLQEDKSSETMHDPSTRGVETRNVTAVDSPLETATTSESPETERTN. Asn-23 carries N-linked (GlcNAc...) asparagine glycosylation. Residues 29–39 show a composition bias toward low complexity; that stretch reads SPLETATTSES. 8 consecutive transmembrane segments (helical) span residues 56-76, 88-108, 123-143, 156-176, 185-205, 212-232, 255-275, and 282-302; these read FWAL…EGTI, LGGG…MTAM, WPML…GGAT, GIGA…VVPL, IVMG…GLIV, WTFY…FSFL, ALFV…GSVY, and VLVP…FEGS. N-linked (GlcNAc...) asparagine glycosylation is present at Asn-317. 6 helical membrane-spanning segments follow: residues 321–341, 358–378, 386–406, 419–439, 451–471, and 529–549; these read VGVM…LYFM, VQIL…GFLM, PIHY…SLLD, IVYS…LLAP, TWSF…AAVF, and WLVS…AREV.

The protein belongs to the major facilitator superfamily.

It is found in the membrane. Functionally, MFS-type transporter; part of the gene cluster that mediates the biosynthesis of pyrrocidines, fungal natural products containing a macrocyclic para-cyclophane connected to a decahydrofluorene ring system that show potent antibiotic activities toward Gram-negative bacteria. This is MFS-type transporter pydD from Acremonium sp.